The following is a 383-amino-acid chain: Succinyl-diaminopimelate desuccinylase (383 aa).

Histidine 73 lines the Zn(2+) pocket. Residue aspartate 75 is part of the active site. Aspartate 107 serves as a coordination point for Zn(2+). Glutamate 141 acts as the Proton acceptor in catalysis. Zn(2+) is bound by residues glutamate 142, glutamate 170, and histidine 356.

Belongs to the peptidase M20A family. DapE subfamily. In terms of assembly, homodimer. Zn(2+) is required as a cofactor. It depends on Co(2+) as a cofactor.

It catalyses the reaction N-succinyl-(2S,6S)-2,6-diaminopimelate + H2O = (2S,6S)-2,6-diaminopimelate + succinate. It participates in amino-acid biosynthesis; L-lysine biosynthesis via DAP pathway; LL-2,6-diaminopimelate from (S)-tetrahydrodipicolinate (succinylase route): step 3/3. Catalyzes the hydrolysis of N-succinyl-L,L-diaminopimelic acid (SDAP), forming succinate and LL-2,6-diaminopimelate (DAP), an intermediate involved in the bacterial biosynthesis of lysine and meso-diaminopimelic acid, an essential component of bacterial cell walls. This is Succinyl-diaminopimelate desuccinylase from Pseudomonas fluorescens (strain ATCC BAA-477 / NRRL B-23932 / Pf-5).